Here is a 779-residue protein sequence, read N- to C-terminus: Glucan endo-1,3-beta-D-glucosidase 2 (779 aa).

The tract at residues 1–71 (MCYSRQAIPP…SNPLADSQVN (71 aa)) is disordered. Over residues 57-71 (RTPSSSNPLADSQVN) the composition is skewed to polar residues. The interval 73-309 (DNIFQSPVLS…NGLICQLSAD (237 aa)) is beta-sandwich subdomain. The GH81 domain maps to 73 to 779 (DNIFQSPVLS…WSLAYSGAFS (707 aa)). An alpha/beta subdomain region spans residues 309-400 (DSVPSIDMAA…LTNSFDMQVQ (92 aa)). The segment at 375–779 (IASSLDSTVK…WSLAYSGAFS (405 aa)) is sufficient for catalytic activity. Residues 415–779 (NKKADYSQEK…WSLAYSGAFS (365 aa)) form a (alpha/beta)6 barrel subdomain region. The active site involves Asp526. (1,3-beta-D-glucosyl)n-binding residues include His530, Asp607, Glu609, and Glu613. Residues Glu609 and Glu613 contribute to the active site. Residues 678–680 (KID) form a may provide specificity for triple-helical beta-glucan region. A (1,3-beta-D-glucosyl)n-binding site is contributed by Tyr691.

This sequence belongs to the glycosyl hydrolase 81 family.

The protein localises to the cytoplasm. The catalysed reaction is Hydrolysis of (1-&gt;3)-beta-D-glucosidic linkages in (1-&gt;3)-beta-D-glucans.. Inhibited by mercury ions. Cleaves internal linkages in 1,3-beta-glucan. This Saccharomyces cerevisiae (strain ATCC 204508 / S288c) (Baker's yeast) protein is Glucan endo-1,3-beta-D-glucosidase 2.